The following is a 163-amino-acid chain: Nucleotide-binding protein MT0592 (163 aa).

The protein belongs to the YajQ family.

In terms of biological role, nucleotide-binding protein. In Mycobacterium tuberculosis (strain CDC 1551 / Oshkosh), this protein is Nucleotide-binding protein MT0592.